Here is a 328-residue protein sequence, read N- to C-terminus: 6-phosphogluconolactonase (328 aa).

It belongs to the cycloisomerase 2 family.

It carries out the reaction 6-phospho-D-glucono-1,5-lactone + H2O = 6-phospho-D-gluconate + H(+). Its pathway is carbohydrate degradation; pentose phosphate pathway; D-ribulose 5-phosphate from D-glucose 6-phosphate (oxidative stage): step 2/3. Catalyzes the hydrolysis of 6-phosphogluconolactone to 6-phosphogluconate. The sequence is that of 6-phosphogluconolactonase from Photorhabdus laumondii subsp. laumondii (strain DSM 15139 / CIP 105565 / TT01) (Photorhabdus luminescens subsp. laumondii).